Reading from the N-terminus, the 675-residue chain is Serine/threonine-protein kinase ATG1 (675 aa).

In terms of domain architecture, Protein kinase spans 25–328 (FVIGGEIGKG…FEDFFNDPVV (304 aa)). ATP is bound by residues 31 to 39 (IGKGSFAQV) and lysine 54. Catalysis depends on aspartate 168, which acts as the Proton acceptor. Residues 339-374 (DIPKVEQKPSRDLRSLEADPQREQSELAKSPRERPL) are compositionally biased toward basic and acidic residues. Disordered stretches follow at residues 339 to 455 (DIPK…ERKL) and 501 to 577 (RLTS…TTRS). Composition is skewed to polar residues over residues 390 to 399 (ANVSARTGQS), 516 to 538 (ATQQGPPTSTTGAGRMQPSSAVQ), and 556 to 565 (ASRSLNTSSA).

Belongs to the protein kinase superfamily. Ser/Thr protein kinase family. APG1/unc-51/ULK1 subfamily. Homodimer. Forms a ternary complex with ATG13 and ATG17.

It is found in the cytoplasm. Its subcellular location is the preautophagosomal structure membrane. The catalysed reaction is L-seryl-[protein] + ATP = O-phospho-L-seryl-[protein] + ADP + H(+). It carries out the reaction L-threonyl-[protein] + ATP = O-phospho-L-threonyl-[protein] + ADP + H(+). In terms of biological role, serine/threonine protein kinase involved in the cytoplasm to vacuole transport (Cvt) and found to be essential in autophagy, where it is required for the formation of autophagosomes. Involved in the clearance of protein aggregates which cannot be efficiently cleared by the proteasome. Required for selective autophagic degradation of the nucleus (nucleophagy) as well as for mitophagy which contributes to regulate mitochondrial quantity and quality by eliminating the mitochondria to a basal level to fulfill cellular energy requirements and preventing excess ROS production. Also involved in endoplasmic reticulum-specific autophagic process, in selective removal of ER-associated degradation (ERAD) substrates. Plays a key role in ATG9 and ATG23 cycling through the pre-autophagosomal structure and is necessary to promote ATG18 binding to ATG9 through phosphorylation of ATG9. Catalyzes phosphorylation of ATG4, decreasing the interaction between ATG4 and ATG8 and impairing deconjugation of PE-conjugated forms of ATG8. This is Serine/threonine-protein kinase ATG1 from Colletotrichum lindemuthianum (Bean anthracnose fungus).